Consider the following 114-residue polypeptide: Phosphoribosyl-ATP pyrophosphatase (114 aa).

This sequence belongs to the PRA-PH family.

Its subcellular location is the cytoplasm. It catalyses the reaction 1-(5-phospho-beta-D-ribosyl)-ATP + H2O = 1-(5-phospho-beta-D-ribosyl)-5'-AMP + diphosphate + H(+). It participates in amino-acid biosynthesis; L-histidine biosynthesis; L-histidine from 5-phospho-alpha-D-ribose 1-diphosphate: step 2/9. This chain is Phosphoribosyl-ATP pyrophosphatase, found in Leuconostoc mesenteroides subsp. mesenteroides (strain ATCC 8293 / DSM 20343 / BCRC 11652 / CCM 1803 / JCM 6124 / NCDO 523 / NBRC 100496 / NCIMB 8023 / NCTC 12954 / NRRL B-1118 / 37Y).